Reading from the N-terminus, the 190-residue chain is Guanylate kinase (190 aa).

The Guanylate kinase-like domain maps to asparagine 3–glutamate 185. Alanine 10 to serine 17 is an ATP binding site.

This sequence belongs to the guanylate kinase family.

It localises to the cytoplasm. It carries out the reaction GMP + ATP = GDP + ADP. Its function is as follows. Essential for recycling GMP and indirectly, cGMP. The sequence is that of Guanylate kinase from Francisella tularensis subsp. holarctica (strain LVS).